A 552-amino-acid polypeptide reads, in one-letter code: Glutamate--tRNA ligase (552 aa).

The 'HIGH' region signature appears at 41–51 (PSPTGFQHIGG). The 'KMSKS' region signature appears at 293-297 (KLSKR). Lys296 contributes to the ATP binding site.

Belongs to the class-I aminoacyl-tRNA synthetase family. Glutamate--tRNA ligase type 1 subfamily. As to quaternary structure, monomer.

The protein resides in the cytoplasm. It carries out the reaction tRNA(Glu) + L-glutamate + ATP = L-glutamyl-tRNA(Glu) + AMP + diphosphate. Catalyzes the attachment of glutamate to tRNA(Glu) in a two-step reaction: glutamate is first activated by ATP to form Glu-AMP and then transferred to the acceptor end of tRNA(Glu). This Clostridium perfringens (strain SM101 / Type A) protein is Glutamate--tRNA ligase.